Here is a 526-residue protein sequence, read N- to C-terminus: Amino acid transporter heavy chain SLC3A2 (526 aa).

Positions 1 to 31 (MSQDTEVDMKDVELNELEPEKQPMNAADGAA) are disordered. Residues 1 to 75 (MSQDTEVDMK…AGSPGWVRTR (75 aa)) lie on the Cytoplasmic side of the membrane. Serine 2 carries the phosphoserine modification. A Phosphothreonine modification is found at threonine 5. Positions 7-21 (VDMKDVELNELEPEK) are enriched in basic and acidic residues. Residue lysine 42 forms a Glycyl lysine isopeptide (Lys-Gly) (interchain with G-Cter in ubiquitin) linkage. Residue serine 58 is modified to Phosphoserine. Lysine 59 participates in a covalent cross-link: Glycyl lysine isopeptide (Lys-Gly) (interchain with G-Cter in SUMO2). A helical; Signal-anchor for type II membrane protein membrane pass occupies residues 76 to 99 (WALLLLFWLGWLGMLAGAVVIIVR). Residues 100 to 526 (APRCRELPVQ…GLLLQFPFVA (427 aa)) are Extracellular-facing. N-linked (GlcNAc...) asparagine glycosylation is found at asparagine 166, asparagine 259, and asparagine 263. Serine 300 is subject to Phosphoserine. Asparagine 301 carries N-linked (GlcNAc...) asparagine glycosylation. Position 302 is a phosphoserine (serine 302). N-linked (GlcNAc...) asparagine glycans are attached at residues asparagine 318, asparagine 385, and asparagine 399. A Phosphoserine modification is found at serine 420. N-linked (GlcNAc...) asparagine glycosylation occurs at asparagine 509.

The protein belongs to the SLC3A transporter family. Disulfide-linked heterodimer with a non-glycosylated light chain (SLC7A5, SLC7A6, SLC7A7, SLC7A8, SLC7A10 or SLC7A11). Interacts with TLCD3A/CT120 and ICAM1. Constitutively and specifically associates with beta-1 integrins (alpha-2/beta-1, alpha-3/beta-1, alpha-5/beta-1 and alpha-6/beta-1), but minimally with alpha-4/beta-1. Interacts with LAPTM4B; recruits SLC3A2 and SLC7A5 to lysosomes to promote leucine uptake into these organelles and is required for mTORC1 activation. In terms of processing, phosphorylation on Ser-300 or Ser-302 and on Ser-420 by ecto-protein kinases favors heterotypic cell-cell interactions. Post-translationally, N-glycosylated; N-glycosylation is crucial for trafficking and stability of SLC3A2 to the plasma membrane. Detected on the surface of embryonic epithelial cells in the epidermis, thymus, kidney, intestine, brain choroid plexus, and in retina. Detected in adult and embryonic brain, spleen, kidney, intestine and liver, and in adult testis (at protein level). Observed in all adult tissues tested with strongest expression in kidney, small intestine, spleen, thymus and liver. Moderate expression in brain, stomach, heart, testis, lung, skin, pancreas and skeletal muscle. In brain expressed on capillary endothelia in cerebral cortex.

It localises to the apical cell membrane. It is found in the cell membrane. The protein localises to the cell junction. Its subcellular location is the lysosome membrane. The protein resides in the melanosome. It localises to the basolateral cell membrane. Functionally, acts as a chaperone that facilitates biogenesis and trafficking of functional transporters heterodimers to the plasma membrane. Forms heterodimer with SLC7 family transporters (SLC7A5, SLC7A6, SLC7A7, SLC7A8, SLC7A10 and SLC7A11), a group of amino-acid antiporters. Heterodimers function as amino acids exchangers, the specificity of the substrate depending on the SLC7A subunit. Heterodimers SLC3A2/SLC7A6 or SLC3A2/SLC7A7 mediate the uptake of dibasic amino acids. Heterodimer SLC3A2/SLC7A11 functions as an antiporter by mediating the exchange of extracellular anionic L-cystine and intracellular L-glutamate across the cellular plasma membrane. SLC3A2/SLC7A10 translocates small neutral L- and D-amino acids across the plasma membrane. SLC3A2/SLC75 or SLC3A2/SLC7A8 translocates neutral amino acids with broad specificity, thyroid hormones and L-DOPA. SLC3A2 is essential for plasma membrane localization, stability, and the transport activity of SLC7A5 and SLC7A8. When associated with LAPTM4B, the heterodimer SLC7A5 is recruited to lysosomes to promote leucine uptake into these organelles, and thereby mediates mTORC1 activation. Modulates integrin-related signaling and is essential for integrin-dependent cell spreading, migration and tumor progression. The sequence is that of Amino acid transporter heavy chain SLC3A2 from Mus musculus (Mouse).